The sequence spans 171 residues: ATP synthase subunit b (171 aa).

The chain crosses the membrane as a helical span at residues 3–23 (KFLFFIFVFVGISFAGDDTAT).

This sequence belongs to the ATPase B chain family. As to quaternary structure, F-type ATPases have 2 components, F(1) - the catalytic core - and F(0) - the membrane proton channel. F(1) has five subunits: alpha(3), beta(3), gamma(1), delta(1), epsilon(1). F(0) has three main subunits: a(1), b(2) and c(10-14). The alpha and beta chains form an alternating ring which encloses part of the gamma chain. F(1) is attached to F(0) by a central stalk formed by the gamma and epsilon chains, while a peripheral stalk is formed by the delta and b chains.

The protein localises to the cell inner membrane. Its function is as follows. F(1)F(0) ATP synthase produces ATP from ADP in the presence of a proton or sodium gradient. F-type ATPases consist of two structural domains, F(1) containing the extramembraneous catalytic core and F(0) containing the membrane proton channel, linked together by a central stalk and a peripheral stalk. During catalysis, ATP synthesis in the catalytic domain of F(1) is coupled via a rotary mechanism of the central stalk subunits to proton translocation. Functionally, component of the F(0) channel, it forms part of the peripheral stalk, linking F(1) to F(0). In Campylobacter hominis (strain ATCC BAA-381 / DSM 21671 / CCUG 45161 / LMG 19568 / NCTC 13146 / CH001A), this protein is ATP synthase subunit b.